Consider the following 85-residue polypeptide: Acyl carrier protein (85 aa).

Residues 4 to 79 (DELFEKVKEI…NAVNLLSEKL (76 aa)) enclose the Carrier domain. Position 39 is an O-(pantetheine 4'-phosphoryl)serine (Ser-39).

Belongs to the acyl carrier protein (ACP) family. In terms of processing, 4'-phosphopantetheine is transferred from CoA to a specific serine of apo-ACP by AcpS. This modification is essential for activity because fatty acids are bound in thioester linkage to the sulfhydryl of the prosthetic group.

The protein localises to the cytoplasm. The protein operates within lipid metabolism; fatty acid biosynthesis. Functionally, carrier of the growing fatty acid chain in fatty acid biosynthesis. This is Acyl carrier protein from Petrotoga mobilis (strain DSM 10674 / SJ95).